The chain runs to 1182 residues: Lysine-specific demethylase hairless (1182 aa).

Disordered regions lie at residues 227–257 (LGLA…GAGR), 302–380 (YQLG…KKTW), 411–443 (AGSP…ARAW), and 507–546 (TGHS…ASLN). Residues 307-321 (PATPRCPSPGPPTPP) are compositionally biased toward pro residues. The short motif at 561–565 (LCRLL) is the LXXLL motif 1 element. The C6-type zinc finger occupies 595–620 (CSRCHHGLFNTHWRCSHCSHRLCVAC). The interval 697–746 (GDGGQQKEPTEKTPPTPQPSCNGDSNRTKDIKEETPDSTESPAEDGAGRS) is disordered. The segment covering 722–731 (NRTKDIKEET) has biased composition (basic and acidic residues). The LXXLL motif 2 signature appears at 753-757 (LCELL). Residues 939-1150 (DASRVQNLAS…LSAQLYHQGA (212 aa)) form the JmjC domain. The Fe cation site is built by C1000, E1002, and H1118.

Requires Fe(2+) as cofactor. As to expression, expressed predominantly in brain, hair follicles and interfollicular epidermis. No expression in dermis.

It localises to the nucleus. It catalyses the reaction N(6),N(6)-dimethyl-L-lysyl(9)-[histone H3] + 2 2-oxoglutarate + 2 O2 = L-lysyl(9)-[histone H3] + 2 formaldehyde + 2 succinate + 2 CO2. Its function is as follows. Histone demethylase that specifically demethylates both mono- and dimethylated 'Lys-9' of histone H3. May act as a transcription regulator controlling hair biology (via targeting of collagens), neural activity, and cell cycle. In Mus musculus (Mouse), this protein is Lysine-specific demethylase hairless (Hr).